Reading from the N-terminus, the 612-residue chain is Elongation factor 4 (612 aa).

Residues 11–193 (KHIRNFSIVA…EIVKKVPAPD (183 aa)) enclose the tr-type G domain. GTP contacts are provided by residues 23–28 (DHGKST) and 140–143 (NKID).

It belongs to the TRAFAC class translation factor GTPase superfamily. Classic translation factor GTPase family. LepA subfamily.

Its subcellular location is the cell membrane. The enzyme catalyses GTP + H2O = GDP + phosphate + H(+). In terms of biological role, required for accurate and efficient protein synthesis under certain stress conditions. May act as a fidelity factor of the translation reaction, by catalyzing a one-codon backward translocation of tRNAs on improperly translocated ribosomes. Back-translocation proceeds from a post-translocation (POST) complex to a pre-translocation (PRE) complex, thus giving elongation factor G a second chance to translocate the tRNAs correctly. Binds to ribosomes in a GTP-dependent manner. The polypeptide is Elongation factor 4 (Lactobacillus johnsonii (strain CNCM I-12250 / La1 / NCC 533)).